A 95-amino-acid polypeptide reads, in one-letter code: Acylphosphatase 2 (95 aa).

One can recognise an Acylphosphatase-like domain in the interval 6–93; the sequence is RVIVTVQGRV…PLPPGFEVRP (88 aa). Catalysis depends on residues Arg21 and Asn39.

This sequence belongs to the acylphosphatase family.

It carries out the reaction an acyl phosphate + H2O = a carboxylate + phosphate + H(+). In Ralstonia nicotianae (strain ATCC BAA-1114 / GMI1000) (Ralstonia solanacearum), this protein is Acylphosphatase 2 (acyP2).